The primary structure comprises 297 residues: Glutamyl-Q tRNA(Asp) synthetase (297 aa).

L-glutamate contacts are provided by residues 7-11 and E43; that span reads RFAPS. The 'HIGH' region signature appears at 10–20; it reads PSPTGPLHFGS. Zn(2+) is bound by residues C99, C101, Y122, and C126. Positions 182 and 200 each coordinate L-glutamate. Positions 238 to 242 match the 'KMSKS' region motif; it reads KLSKQ. K241 lines the ATP pocket.

The protein belongs to the class-I aminoacyl-tRNA synthetase family. GluQ subfamily. Requires Zn(2+) as cofactor.

In terms of biological role, catalyzes the tRNA-independent activation of glutamate in presence of ATP and the subsequent transfer of glutamate onto a tRNA(Asp). Glutamate is transferred on the 2-amino-5-(4,5-dihydroxy-2-cyclopenten-1-yl) moiety of the queuosine in the wobble position of the QUC anticodon. The chain is Glutamyl-Q tRNA(Asp) synthetase from Burkholderia pseudomallei (strain K96243).